Here is a 47-residue protein sequence, read N- to C-terminus: Protein YqhI (47 aa).

The polypeptide is Protein YqhI (Escherichia coli (strain K12)).